The sequence spans 188 residues: Large ribosomal subunit protein eL18 (188 aa).

It belongs to the eukaryotic ribosomal protein eL18 family.

It localises to the cytoplasm. This chain is Large ribosomal subunit protein eL18 (RpL18), found in Drosophila melanogaster (Fruit fly).